Reading from the N-terminus, the 217-residue chain is Superoxide dismutase [Cu-Zn], chloroplastic (217 aa).

Residues 1–63 (MAAHSIFTTT…TTPKPLTVFA (63 aa)) constitute a chloroplast transit peptide. Cu cation contacts are provided by His109, His111, and His126. A disulfide bridge links Cys120 with Cys209. Zn(2+) is bound by residues His126, His134, His143, and Asp146. Residue His183 coordinates Cu cation.

This sequence belongs to the Cu-Zn superoxide dismutase family. As to quaternary structure, homotetramer. The cofactor is Cu cation. Zn(2+) is required as a cofactor.

The protein resides in the plastid. Its subcellular location is the chloroplast. The enzyme catalyses 2 superoxide + 2 H(+) = H2O2 + O2. Functionally, destroys radicals which are normally produced within the cells and which are toxic to biological systems. This chain is Superoxide dismutase [Cu-Zn], chloroplastic (SODCP.2), found in Solanum lycopersicum (Tomato).